Consider the following 358-residue polypeptide: WD repeat-containing protein 53 (358 aa).

WD repeat units follow at residues 8 to 46, 92 to 131, 134 to 174, 195 to 234, and 239 to 278; these read GHSSPILCLNASQEGLVASGAEGGDLVVWGEDGTLLGHT, VNEEEINCLSLNETENLLASADDSGTIKILDLENKKISRS, RHSN…PLWI, LNPALAHSVSVASCGNVFSCGAEDGKVRIFRVMGVKCEQE, and GHSLGVSQVCFLRESYLLLTGGNDGKIKLWDVSSEIEKKH. Positions 278–294 are enriched in basic residues; sequence HKSPTKHTHRKKTKRAA. The disordered stretch occupies residues 278-309; sequence HKSPTKHTHRKKTKRAAYTKQGGGTHASVTGE.

Belongs to the WD repeat WDR53 family.

The polypeptide is WD repeat-containing protein 53 (WDR53) (Bos taurus (Bovine)).